Reading from the N-terminus, the 591-residue chain is V-type ATP synthase alpha chain (591 aa).

233 to 240 (GPFGAGKT) provides a ligand contact to ATP.

Belongs to the ATPase alpha/beta chains family.

It carries out the reaction ATP + H2O + 4 H(+)(in) = ADP + phosphate + 5 H(+)(out). Its function is as follows. Produces ATP from ADP in the presence of a proton gradient across the membrane. The V-type alpha chain is a catalytic subunit. This is V-type ATP synthase alpha chain from Streptococcus pyogenes serotype M18 (strain MGAS8232).